A 209-amino-acid chain; its full sequence is Uracil phosphoribosyltransferase (209 aa).

Residues arginine 79, arginine 104, and 131 to 139 each bind 5-phospho-alpha-D-ribose 1-diphosphate; that span reads DPMLATGAS. Residues isoleucine 194 and 199 to 201 each bind uracil; that span reads GDA. Aspartate 200 lines the 5-phospho-alpha-D-ribose 1-diphosphate pocket.

It belongs to the UPRTase family. Mg(2+) serves as cofactor.

It carries out the reaction UMP + diphosphate = 5-phospho-alpha-D-ribose 1-diphosphate + uracil. It functions in the pathway pyrimidine metabolism; UMP biosynthesis via salvage pathway; UMP from uracil: step 1/1. With respect to regulation, allosterically activated by GTP. Catalyzes the conversion of uracil and 5-phospho-alpha-D-ribose 1-diphosphate (PRPP) to UMP and diphosphate. This Staphylococcus aureus (strain JH1) protein is Uracil phosphoribosyltransferase.